A 156-amino-acid polypeptide reads, in one-letter code: Small ribosomal subunit protein uS7 (156 aa).

It belongs to the universal ribosomal protein uS7 family. As to quaternary structure, part of the 30S ribosomal subunit. Contacts proteins S9 and S11.

One of the primary rRNA binding proteins, it binds directly to 16S rRNA where it nucleates assembly of the head domain of the 30S subunit. Is located at the subunit interface close to the decoding center, probably blocks exit of the E-site tRNA. The protein is Small ribosomal subunit protein uS7 of Marinobacter nauticus (strain ATCC 700491 / DSM 11845 / VT8) (Marinobacter aquaeolei).